Here is a 379-residue protein sequence, read N- to C-terminus: Epoxyqueuosine reductase (379 aa).

Residue Asp-139 is the Proton donor of the active site. A 4Fe-4S ferredoxin-type domain is found at 181–213 (IPLPVDQPVEEGCGKCVACMTICPTGAIVEPYT). [4Fe-4S] cluster is bound by residues Cys-193, Cys-196, Cys-199, Cys-203, Cys-219, Cys-246, Cys-249, and Cys-253.

This sequence belongs to the QueG family. In terms of assembly, monomer. Cob(II)alamin serves as cofactor. [4Fe-4S] cluster is required as a cofactor.

The protein resides in the cytoplasm. The catalysed reaction is epoxyqueuosine(34) in tRNA + AH2 = queuosine(34) in tRNA + A + H2O. The protein operates within tRNA modification; tRNA-queuosine biosynthesis. In terms of biological role, catalyzes the conversion of epoxyqueuosine (oQ) to queuosine (Q), which is a hypermodified base found in the wobble positions of tRNA(Asp), tRNA(Asn), tRNA(His) and tRNA(Tyr). In Escherichia coli (strain K12), this protein is Epoxyqueuosine reductase.